The sequence spans 383 residues: Podocin (383 aa).

Residues 1 to 41 are compositionally biased toward basic and acidic residues; that stretch reads MERRARSSSRESRGRGGRTPHKENKRAKAERSGGGRGRQEA. Residues 1–76 are disordered; it reads MERRARSSSR…VDEVRGSGEE (76 aa). The Cytoplasmic portion of the chain corresponds to 1–102; it reads MERRARSSSR…TKSSGLGACE (102 aa). C101 is lipidated: S-palmitoyl cysteine. Residues 103–123 lie within the membrane without spanning it; the sequence is WLLVLISLLFIIMTFPFSIWF. The Cytoplasmic portion of the chain corresponds to 124 to 383; it reads CVKVVQEYER…NPKKKDSPML (260 aa). Residue Q287 is glycosylated (N-linked (GlcNAc...) asparagine). The tract at residues 355 to 383 is disordered; it reads NRTQGSLPFPSPSKPVEPLNPKKKDSPML. Positions 374-383 are enriched in basic and acidic residues; sequence NPKKKDSPML.

Belongs to the band 7/mec-2 family. Interacts with nephrin/NPHS1 and KIRREL1. Interacts directly with CD2AP. Interacts with DDN. In terms of processing, glycosylated. In terms of tissue distribution, almost exclusively expressed in the podocytes of fetal and mature kidney glomeruli.

It localises to the cell membrane. Its subcellular location is the endoplasmic reticulum. Functionally, plays a role in the regulation of glomerular permeability, acting probably as a linker between the plasma membrane and the cytoskeleton. The polypeptide is Podocin (NPHS2) (Homo sapiens (Human)).